Consider the following 154-residue polypeptide: Photosystem II extrinsic protein U, chloroplastic (154 aa).

The transit peptide at 1–36 directs the protein to the chloroplast; the sequence is MAFISTPLGKVTVKSATVSANRRGLRMQSDSEPVVS. A thylakoid-targeting transit peptide spans 37 to 61; sequence RRALLSGALAAAVAAALARARPAQA.

Belongs to the PsbU family. In terms of assembly, PSII is composed of 1 copy each of membrane proteins PsbA, PsbB, PsbC, PsbD, PsbE, PsbF, PsbH, PsbI, PsbJ, PsbK, PsbL, PsbM, PsbT, PsbY, PsbZ, Psb30/Ycf12, at least 3 peripheral proteins of the oxygen-evolving complex and a large number of cofactors. It forms dimeric complexes. The extrinsic subunits in red algae are PsbO (OEC33), PsbQ', cytochrome c-550 and PsbU. Predicted to be translocated into the thylakoid lumen by the Tat system. The position of the first transit peptide cleavage has not been experimentally proven.

Its subcellular location is the plastid. The protein localises to the chloroplast thylakoid membrane. Functionally, one of the extrinsic, lumenal subunits of photosystem II (PSII). PSII is a light-driven water plastoquinone oxidoreductase, using light energy to abstract electrons from H(2)O, generating a proton gradient subsequently used for ATP formation. The extrinsic proteins stabilize the structure of photosystem II oxygen-evolving complex (OEC), the ion environment of oxygen evolution and protect the OEC against heat-induced inactivation. This is Photosystem II extrinsic protein U, chloroplastic from Cyanidium caldarium (Red alga).